Here is a 498-residue protein sequence, read N- to C-terminus: MRFNPTTSGPAVSTLDEKNLGRIAQIIGPVLDVVFPPGKMPNIYNALVVKGRDTVGQQINVTCEVQQLLGNNRVRAVAMSATDGLTRGMEVIDTGAPLSVPVGGATLGRIFNVLGEPVDNLGPVDTRTTSPIHRSAPAFIQLDTKLSIFETGIKVVDLLAPYRRGGKIGLFGGAGVGKTVLIMELINNIAKAHGGVSVFGGVGERTREGNDLYMEMKESGVINEKNIAESKVALVYGQMNEPPGARMRVGLTALTMAEYFRDVNEQDVLLFIDNIFRFVQAGSEVSALLGRMPSAVGYQPTLSTEMGSLQERITSTKEGSITSIQAVYVPADDLTDPAPATTFAHLDATTVLSRGLAAKGIYPAVDPLDSTSTMLQPGIVGEEHYETAQKVKQTLQRYKELQDIIAILGLDELSEEDRLTVARARKIERFLSQPFFVAEVFTGSPGKYVGLAETVRGFQLILSGELDSLPEQAFYLVGNIDEATAKAMNLERGGNLKK.

172 to 179 (GGAGVGKT) contributes to the ATP binding site.

This sequence belongs to the ATPase alpha/beta chains family. In terms of assembly, F-type ATPases have 2 components, CF(1) - the catalytic core - and CF(0) - the membrane proton channel. CF(1) has five subunits: alpha(3), beta(3), gamma(1), delta(1), epsilon(1). CF(0) has four main subunits: a(1), b(1), b'(1) and c(9-12).

The protein resides in the plastid. Its subcellular location is the chloroplast thylakoid membrane. The enzyme catalyses ATP + H2O + 4 H(+)(in) = ADP + phosphate + 5 H(+)(out). In terms of biological role, produces ATP from ADP in the presence of a proton gradient across the membrane. The catalytic sites are hosted primarily by the beta subunits. The chain is ATP synthase subunit beta, chloroplastic from Aspidistra elatior (Cast-iron plant).